We begin with the raw amino-acid sequence, 579 residues long: Glucose starvation modulator protein 1 (579 aa).

The segment at residues 20-48 is a DNA-binding region (zn(2)-C6 fungal-type); the sequence is CVFCHEKHLQCDLGRPCQNCSKRGIGDTC. The segment covering 43–53 has biased composition (basic and acidic residues); the sequence is GIGDTCRDKER. Disordered stretches follow at residues 43–75 and 319–342; these read GIGD…STKS and QMAS…GETV. Basic residues predominate over residues 54-64; the sequence is KPRKRGPRKVK. Polar residues predominate over residues 330–339; it reads NDTSPESQGG. The PAS domain maps to 444-516; the sequence is LLEYESMAKL…DIFHEYLAFG (73 aa).

It belongs to the ERT1/acuK family.

The protein resides in the nucleus. Its function is as follows. Transcription factor which regulates nonfermentable carbon utilization. This Kluyveromyces lactis (strain ATCC 8585 / CBS 2359 / DSM 70799 / NBRC 1267 / NRRL Y-1140 / WM37) (Yeast) protein is Glucose starvation modulator protein 1 (GSM1).